Reading from the N-terminus, the 405-residue chain is 1-deoxy-D-xylulose 5-phosphate reductoisomerase (405 aa).

NADPH-binding residues include T16, G17, S18, I19, G42, R43, N44, and N130. Residue K131 coordinates 1-deoxy-D-xylulose 5-phosphate. E132 lines the NADPH pocket. D156 is a Mn(2+) binding site. 1-deoxy-D-xylulose 5-phosphate-binding residues include S157, E158, S192, and H215. Mn(2+) is bound at residue E158. G221 serves as a coordination point for NADPH. Residues S228, N233, K234, and E237 each coordinate 1-deoxy-D-xylulose 5-phosphate. E237 is a Mn(2+) binding site.

It belongs to the DXR family. The cofactor is Mg(2+). Requires Mn(2+) as cofactor.

It catalyses the reaction 2-C-methyl-D-erythritol 4-phosphate + NADP(+) = 1-deoxy-D-xylulose 5-phosphate + NADPH + H(+). It functions in the pathway isoprenoid biosynthesis; isopentenyl diphosphate biosynthesis via DXP pathway; isopentenyl diphosphate from 1-deoxy-D-xylulose 5-phosphate: step 1/6. Its function is as follows. Catalyzes the NADPH-dependent rearrangement and reduction of 1-deoxy-D-xylulose-5-phosphate (DXP) to 2-C-methyl-D-erythritol 4-phosphate (MEP). In Pasteurella multocida (strain Pm70), this protein is 1-deoxy-D-xylulose 5-phosphate reductoisomerase.